Reading from the N-terminus, the 141-residue chain is MAKKLVGSMKLQVPAGQANPSPPVGPALGQRGINIMEFCKAFNAKTADMEQGAPCPTVITYYQDKSFTMDIKTPPASYYLKKAAKLSSGAKTPSREVVGYVSSKQVREIAEAKMKDLNATSIEAAMKIILGSARSMGIEVK.

It belongs to the universal ribosomal protein uL11 family. In terms of assembly, part of the ribosomal stalk of the 50S ribosomal subunit. Interacts with L10 and the large rRNA to form the base of the stalk. L10 forms an elongated spine to which L12 dimers bind in a sequential fashion forming a multimeric L10(L12)X complex. Post-translationally, one or more lysine residues are methylated.

In terms of biological role, forms part of the ribosomal stalk which helps the ribosome interact with GTP-bound translation factors. This is Large ribosomal subunit protein uL11 from Roseobacter denitrificans (strain ATCC 33942 / OCh 114) (Erythrobacter sp. (strain OCh 114)).